The chain runs to 169 residues: Short form salivary protein D7R3 (169 aa).

The N-terminal stretch at 1–21 is a signal peptide; it reads MFGKLLPCAILVWCLFSLGQA. Cystine bridges form between C30-C62, C43-C168, and C101-C120. 2 residues coordinate noradrenaline: E31 and R46. E31 lines the serotonin pocket. 4 residues coordinate serotonin: H59, Y118, D135, and E138. Histamine is bound by residues Y118, D135, and E138. Residues D135 and E138 each coordinate noradrenaline.

This sequence belongs to the PBP/GOBP family. In terms of tissue distribution, female saliva (at protein level). Female salivary gland. Low-level expression in female carcass without salivary glands. Not detected in male tissues.

The protein resides in the secreted. Its function is as follows. Modulates blood feeding of female mosquitoes on vertebrate species by binding and sequestering different mediators involved in the host response. Binds serotonin, noradrenaline, histamine and adrenaline. Inhibits histamine-, serotonin- and noradrenaline-induced smooth muscle contraction. Exhibits vasodilating activity. The chain is Short form salivary protein D7R3 from Anopheles gambiae (African malaria mosquito).